Here is a 45-residue protein sequence, read N- to C-terminus: Osteocalcin (45 aa).

One can recognise a Gla domain in the interval 1 to 41; sequence AAGELTLTQLESLREVCEANLACEDMMDAQGIIAAYTAYYG. Positions 11, 15, 18, and 24 each coordinate Ca(2+). 3 positions are modified to 4-carboxyglutamate: E11, E15, and E18. An intrachain disulfide couples C17 to C23.

Belongs to the osteocalcin/matrix Gla protein family. Gamma-carboxyglutamate residues are formed by vitamin K dependent carboxylation by GGCX. These residues are essential for the binding of calcium. Also found in smaller quantities in dentin.

It is found in the secreted. In terms of biological role, the carboxylated form is one of the main organic components of the bone matrix, which constitutes 1-2% of the total bone protein. The carboxylated form binds strongly to apatite and calcium. This is Osteocalcin (bglap) from Lepomis macrochirus (Bluegill).